We begin with the raw amino-acid sequence, 349 residues long: Tetraacyldisaccharide 4'-kinase (349 aa).

An ATP-binding site is contributed by T58–T65.

It belongs to the LpxK family.

The enzyme catalyses a lipid A disaccharide + ATP = a lipid IVA + ADP + H(+). Its pathway is glycolipid biosynthesis; lipid IV(A) biosynthesis; lipid IV(A) from (3R)-3-hydroxytetradecanoyl-[acyl-carrier-protein] and UDP-N-acetyl-alpha-D-glucosamine: step 6/6. Transfers the gamma-phosphate of ATP to the 4'-position of a tetraacyldisaccharide 1-phosphate intermediate (termed DS-1-P) to form tetraacyldisaccharide 1,4'-bis-phosphate (lipid IVA). This chain is Tetraacyldisaccharide 4'-kinase, found in Shewanella amazonensis (strain ATCC BAA-1098 / SB2B).